Consider the following 459-residue polypeptide: Methylenetetrahydrofolate--tRNA-(uracil-5-)-methyltransferase TrmFO (459 aa).

FAD is bound at residue 11–16; sequence GAGLAG.

The protein belongs to the MnmG family. TrmFO subfamily. The cofactor is FAD.

The protein resides in the cytoplasm. The enzyme catalyses uridine(54) in tRNA + (6R)-5,10-methylene-5,6,7,8-tetrahydrofolate + NADH + H(+) = 5-methyluridine(54) in tRNA + (6S)-5,6,7,8-tetrahydrofolate + NAD(+). It carries out the reaction uridine(54) in tRNA + (6R)-5,10-methylene-5,6,7,8-tetrahydrofolate + NADPH + H(+) = 5-methyluridine(54) in tRNA + (6S)-5,6,7,8-tetrahydrofolate + NADP(+). Functionally, catalyzes the folate-dependent formation of 5-methyl-uridine at position 54 (M-5-U54) in all tRNAs. The chain is Methylenetetrahydrofolate--tRNA-(uracil-5-)-methyltransferase TrmFO from Synechococcus sp. (strain CC9311).